The following is a 311-amino-acid chain: Ribosomal RNA small subunit methyltransferase H (311 aa).

S-adenosyl-L-methionine contacts are provided by residues 32-34 (AGH), Asp-52, Phe-79, Asp-100, and Gln-107.

The protein belongs to the methyltransferase superfamily. RsmH family.

It localises to the cytoplasm. The catalysed reaction is cytidine(1402) in 16S rRNA + S-adenosyl-L-methionine = N(4)-methylcytidine(1402) in 16S rRNA + S-adenosyl-L-homocysteine + H(+). Functionally, specifically methylates the N4 position of cytidine in position 1402 (C1402) of 16S rRNA. This is Ribosomal RNA small subunit methyltransferase H from Staphylococcus aureus (strain bovine RF122 / ET3-1).